We begin with the raw amino-acid sequence, 440 residues long: Ribosomal protein uS12 methylthiotransferase RimO (440 aa).

The MTTase N-terminal domain occupies 8-118 (PTVGFVSLGC…VMGIVHTHLP (111 aa)). [4Fe-4S] cluster contacts are provided by Cys-17, Cys-53, Cys-82, Cys-149, Cys-153, and Cys-156. A Radical SAM core domain is found at 135–372 (LTPDHFAYLK…MQVQEDISAD (238 aa)). One can recognise a TRAM domain in the interval 375-440 (AAKIDTVIQV…DHHDLYAQVV (66 aa)).

Belongs to the methylthiotransferase family. RimO subfamily. [4Fe-4S] cluster serves as cofactor.

It is found in the cytoplasm. The enzyme catalyses L-aspartate(89)-[ribosomal protein uS12]-hydrogen + (sulfur carrier)-SH + AH2 + 2 S-adenosyl-L-methionine = 3-methylsulfanyl-L-aspartate(89)-[ribosomal protein uS12]-hydrogen + (sulfur carrier)-H + 5'-deoxyadenosine + L-methionine + A + S-adenosyl-L-homocysteine + 2 H(+). In terms of biological role, catalyzes the methylthiolation of an aspartic acid residue of ribosomal protein uS12. The polypeptide is Ribosomal protein uS12 methylthiotransferase RimO (Dechloromonas aromatica (strain RCB)).